The primary structure comprises 270 residues: Ribosomal RNA small subunit methyltransferase A (270 aa).

Positions 15, 17, 42, 64, 89, and 108 each coordinate S-adenosyl-L-methionine.

This sequence belongs to the class I-like SAM-binding methyltransferase superfamily. rRNA adenine N(6)-methyltransferase family. RsmA subfamily.

It is found in the cytoplasm. It catalyses the reaction adenosine(1518)/adenosine(1519) in 16S rRNA + 4 S-adenosyl-L-methionine = N(6)-dimethyladenosine(1518)/N(6)-dimethyladenosine(1519) in 16S rRNA + 4 S-adenosyl-L-homocysteine + 4 H(+). In terms of biological role, specifically dimethylates two adjacent adenosines (A1518 and A1519) in the loop of a conserved hairpin near the 3'-end of 16S rRNA in the 30S particle. May play a critical role in biogenesis of 30S subunits. This is Ribosomal RNA small subunit methyltransferase A from Anaplasma marginale (strain Florida).